The chain runs to 255 residues: Ribonuclease HII (255 aa).

Residues 72 to 255 (RLIAGIDEVG…RTFAPIKDMI (184 aa)) enclose the RNase H type-2 domain. Positions 78, 79, and 170 each coordinate a divalent metal cation.

It belongs to the RNase HII family. Mn(2+) is required as a cofactor. Mg(2+) serves as cofactor.

It localises to the cytoplasm. The catalysed reaction is Endonucleolytic cleavage to 5'-phosphomonoester.. Its function is as follows. Endonuclease that specifically degrades the RNA of RNA-DNA hybrids. This is Ribonuclease HII from Enterococcus faecalis (strain ATCC 700802 / V583).